A 383-amino-acid chain; its full sequence is ATP phosphoribosyltransferase regulatory subunit (383 aa).

Belongs to the class-II aminoacyl-tRNA synthetase family. HisZ subfamily. In terms of assembly, heteromultimer composed of HisG and HisZ subunits.

The protein resides in the cytoplasm. It participates in amino-acid biosynthesis; L-histidine biosynthesis; L-histidine from 5-phospho-alpha-D-ribose 1-diphosphate: step 1/9. Functionally, required for the first step of histidine biosynthesis. May allow the feedback regulation of ATP phosphoribosyltransferase activity by histidine. This chain is ATP phosphoribosyltransferase regulatory subunit, found in Neisseria gonorrhoeae (strain ATCC 700825 / FA 1090).